The following is an 88-amino-acid chain: Small ribosomal subunit protein bS20 (88 aa).

The segment at 1–27 (MANIPSAKKRARQAEKRRKHNQSQRSM) is disordered. The segment covering 7–22 (AKKRARQAEKRRKHNQ) has biased composition (basic residues).

Belongs to the bacterial ribosomal protein bS20 family.

In terms of biological role, binds directly to 16S ribosomal RNA. This Alkalilimnicola ehrlichii (strain ATCC BAA-1101 / DSM 17681 / MLHE-1) protein is Small ribosomal subunit protein bS20.